The following is a 422-amino-acid chain: Lipase member M (422 aa).

Residues 1-33 (MSEILSRVWTVSHRVEIWLLILVAYLLQRNVNS) form the signal peptide. N-linked (GlcNAc...) asparagine glycosylation occurs at Asn-48. The AB hydrolase-1 domain occupies 92–392 (PVVLLQHGLL…EWAHVDFIWG (301 aa)). The Nucleophile role is filled by Ser-186. A disulfide bridge links Cys-260 with Cys-269. Active-site charge relay system residues include Asp-357 and His-386.

Belongs to the AB hydrolase superfamily. Lipase family.

The protein resides in the secreted. In terms of biological role, plays a highly specific role in the last step of keratinocyte differentiation. May have an essential function in lipid metabolism of the most differentiated epidermal layers. The chain is Lipase member M (Lipm) from Mus musculus (Mouse).